Reading from the N-terminus, the 288-residue chain is 4-diphosphocytidyl-2-C-methyl-D-erythritol kinase (288 aa).

Residue Lys22 is part of the active site. Residue 104–114 participates in ATP binding; the sequence is PSQAGLGGGSS. The active site involves Asp146.

This sequence belongs to the GHMP kinase family. IspE subfamily.

It carries out the reaction 4-CDP-2-C-methyl-D-erythritol + ATP = 4-CDP-2-C-methyl-D-erythritol 2-phosphate + ADP + H(+). Its pathway is isoprenoid biosynthesis; isopentenyl diphosphate biosynthesis via DXP pathway; isopentenyl diphosphate from 1-deoxy-D-xylulose 5-phosphate: step 3/6. Catalyzes the phosphorylation of the position 2 hydroxy group of 4-diphosphocytidyl-2C-methyl-D-erythritol. This Protochlamydia amoebophila (strain UWE25) protein is 4-diphosphocytidyl-2-C-methyl-D-erythritol kinase.